The chain runs to 929 residues: Collagen alpha-1(XII) chain (929 aa).

One can recognise a VWFA 1 domain in the interval 1–49 (DVEIFAVGVKDAVRSELEAIATPPTATHVYTVEDFDAFQRISFELTQSI). Fibronectin type-III domains are found at residues 67 to 156 (PPRD…LEVR), 158 to 250 (APRN…VGEP), 251 to 340 (KNLR…LQER), 342 to 432 (SPRD…ASPD), 434 to 521 (KIVK…LSPF), and 523 to 613 (APRS…TLRD). N98 is a glycosylation site (N-linked (GlcNAc...) asparagine). O-linked (Xyl...) (chondroitin sulfate) serine glycosylation is found at S231, S324, and S415. Residues 633–805 (DIVLLVDGSW…SLLTNIVNDL (173 aa)) enclose the VWFA 2 domain. The region spanning 821–910 (PPSNLVTSEP…AGTETTLPIP (90 aa)) is the Fibronectin type-III 7 domain.

This sequence belongs to the fibril-associated collagens with interrupted helices (FACIT) family. Trimer of identical chains each containing 190 kDa of non-triple-helical sequences. The triple-helical tail is stabilized by disulfide bonds at each end. In terms of processing, prolines at the third position of the tripeptide repeating unit (G-X-Y) are hydroxylated in some or all of the chains.

The protein resides in the secreted. It is found in the extracellular space. It localises to the extracellular matrix. Functionally, type XII collagen interacts with type I collagen-containing fibrils, the COL1 domain could be associated with the surface of the fibrils, and the COL2 and NC3 domains may be localized in the perifibrillar matrix. Could play a developmental role in regeneration. The protein is Collagen alpha-1(XII) chain of Notophthalmus viridescens (Eastern newt).